The chain runs to 1755 residues: Transposon Ty1-MR1 Gag-Pol polyprotein (1755 aa).

Composition is skewed to polar residues over residues 1-31 (MESQ…TTQD), 46-60 (VSTQ…TPLS), and 137-168 (VGTH…TNQH). Disordered stretches follow at residues 1–88 (MESQ…YPQQ), 137–174 (VGTH…PPPI), and 350–420 (QQES…IRGS). The segment at 299–401 (NNGIPINNKV…NSQSRTARAH (103 aa)) is RNA-binding. The span at 363-372 (SPSDEKKDSR) shows a compositional bias: basic and acidic residues. Over residues 373 to 411 (TYTNTTKPKSITRNSQKPNNSQSRTARAHNVSTFNNSPG) the composition is skewed to polar residues. Aspartate 461 acts as the For protease activity; shared with dimeric partner in catalysis. Positions 583–640 (NVHTSESTRKYPYPFIHRMLAHANAQTIRYSLKNNTITYFNESDVDWSSAIDYQCPDC) are integrase-type zinc finger-like. Residues 660 to 835 (NSYEPFQYLH…AGLDISTLLP (176 aa)) form the Integrase catalytic domain. Positions 671 and 736 each coordinate Mg(2+). The segment at 958 to 1172 (AVSPTDSTPP…LGGIGDSNAY (215 aa)) is disordered. Positions 960–969 (SPTDSTPPST) are enriched in low complexity. Residues 1005-1015 (STPQISDIEST) are compositionally biased toward polar residues. Over residues 1038-1053 (ESSHASKSKDFRHSDS) the composition is skewed to basic and acidic residues. Composition is skewed to polar residues over residues 1054–1082 (YSDN…QTSE) and 1095–1106 (SIDTSSSESNSL). The Bipartite nuclear localization signal motif lies at 1178–1212 (KKRSLEDNETEIKVSRDTWNTKNMRSLEPPRSKKR). Residues 1338–1476 (NNYYITQLDI…DILGLEIKYQ (139 aa)) enclose the Reverse transcriptase Ty1/copia-type domain. Positions 1346, 1427, 1428, 1610, 1652, and 1685 each coordinate Mg(2+). In terms of domain architecture, RNase H Ty1/copia-type spans 1610 to 1752 (DASYGNQPYY…IKTFKLLTNK (143 aa)).

The capsid protein forms a homotrimer, from which the VLPs are assembled. The protease is a homodimer, whose active site consists of two apposed aspartic acid residues. Post-translationally, initially, virus-like particles (VLPs) are composed of the structural unprocessed proteins Gag and Gag-Pol, and also contain the host initiator methionine tRNA (tRNA(i)-Met) which serves as a primer for minus-strand DNA synthesis, and a dimer of genomic Ty RNA. Processing of the polyproteins occurs within the particle and proceeds by an ordered pathway, called maturation. First, the protease (PR) is released by autocatalytic cleavage of the Gag-Pol polyprotein yielding capsid protein p45 and a Pol-p154 precursor protein. This cleavage is a prerequisite for subsequent processing of Pol-p154 at the remaining sites to release the mature structural and catalytic proteins. Maturation takes place prior to the RT reaction and is required to produce transposition-competent VLPs.

Its subcellular location is the cytoplasm. It is found in the nucleus. It carries out the reaction DNA(n) + a 2'-deoxyribonucleoside 5'-triphosphate = DNA(n+1) + diphosphate. The enzyme catalyses Endonucleolytic cleavage to 5'-phosphomonoester.. Functionally, capsid protein (CA) is the structural component of the virus-like particle (VLP), forming the shell that encapsulates the retrotransposons dimeric RNA genome. The particles are assembled from trimer-clustered units and there are holes in the capsid shells that allow for the diffusion of macromolecules. CA also has nucleocapsid-like chaperone activity, promoting primer tRNA(i)-Met annealing to the multipartite primer-binding site (PBS), dimerization of Ty1 RNA and initiation of reverse transcription. Its function is as follows. The aspartyl protease (PR) mediates the proteolytic cleavages of the Gag and Gag-Pol polyproteins after assembly of the VLP. Reverse transcriptase/ribonuclease H (RT) is a multifunctional enzyme that catalyzes the conversion of the retro-elements RNA genome into dsDNA within the VLP. The enzyme displays a DNA polymerase activity that can copy either DNA or RNA templates, and a ribonuclease H (RNase H) activity that cleaves the RNA strand of RNA-DNA heteroduplexes during plus-strand synthesis and hydrolyzes RNA primers. The conversion leads to a linear dsDNA copy of the retrotransposon that includes long terminal repeats (LTRs) at both ends. In terms of biological role, integrase (IN) targets the VLP to the nucleus, where a subparticle preintegration complex (PIC) containing at least integrase and the newly synthesized dsDNA copy of the retrotransposon must transit the nuclear membrane. Once in the nucleus, integrase performs the integration of the dsDNA into the host genome. The sequence is that of Transposon Ty1-MR1 Gag-Pol polyprotein (TY1B-MR1) from Saccharomyces cerevisiae (strain ATCC 204508 / S288c) (Baker's yeast).